A 542-amino-acid chain; its full sequence is Sodium/hydrogen exchanger 8 (542 aa).

11 helical membrane passes run 55–75 (EQSS…CIIL), 79–99 (LIRY…LGIL), 118–138 (EEMF…IFES), 151–171 (IGSI…VVGG), 186–206 (NMTD…VATI), 256–276 (TFLQ…ALGT), 306–326 (AYLP…VFAF), 349–369 (LVLF…NFFR), 374–394 (TPKM…PYAL), 412–432 (TTIV…MPLI), and 446–466 (NKKD…ESEH). Phosphothreonine is present on Thr-471. Phosphoserine is present on residues Ser-532 and Ser-534.

It belongs to the monovalent cation:proton antiporter 1 (CPA1) transporter (TC 2.A.36) family.

It localises to the golgi apparatus membrane. Its subcellular location is the golgi apparatus. It is found in the trans-Golgi network membrane. The protein localises to the endosome. The protein resides in the multivesicular body membrane. It localises to the apical cell membrane. Its subcellular location is the cytoplasmic vesicle. It is found in the secretory vesicle. The protein localises to the acrosome. The enzyme catalyses Na(+)(in) + H(+)(out) = Na(+)(out) + H(+)(in). Its function is as follows. Na(+)/H(+) antiporter. Mediates the electoneutral exchange of intracellular H(+) ions for extracellular Na(+) in 1:1 stoichiometry. Acts as an Na(+)/H(+) exchanger in the trans-Golgi. Contributes to the regulation of pH regulation of Golgi apparatus, and consequently, in protein trafficking and endosomal morphology. In germ cells, plays a crucial role in acrosome biogenesis and sperm development, probably by playing a role in the fusion of the Golgi-derived vesicles that form the acrosomal cap. Can also be active at the cell surface of specialized cells. In the small intestine, at the cell membrane, plays a major physiological role in transepithelial absorption of Na(+) and regulates intracellular pH homeostasis of intestinal epithelial cells. Acts as an important regulator of mucosal integrity in the intestine and in the stomach, could mediate the pH fluctuation necessary for mucin exocytosis or assist membrane trafficking of other proteins. Plays a role in photoreceptor survival and in the maintenance of intracellular pH homeostasis in retinal pigment epithelium (RPE cells). The sequence is that of Sodium/hydrogen exchanger 8 (SLC9A8) from Macaca fascicularis (Crab-eating macaque).